The chain runs to 454 residues: ESX-1 secretion-associated protein EspB (454 aa).

Disordered regions lie at residues 17 to 40, 82 to 128, and 391 to 454; these read RADE…SGLT, GEVE…AGES, and AGQG…QDNK. Positions 391–422 are enriched in gly residues; it reads AGQGGGAAGRGMAGGGMGMPMGGAGQGQGGAK.

This sequence belongs to the EspB family. Cleaved at close to the C-terminus during secretion.

It localises to the secreted. This is ESX-1 secretion-associated protein EspB from Mycobacterium marinum (strain ATCC BAA-535 / M).